Consider the following 117-residue polypeptide: NADH-quinone oxidoreductase subunit A (117 aa).

3 helical membrane-spanning segments follow: residues 4 to 24 (WIGVALFIVVGIVFGAGGMLT), 64 to 84 (LMFVIFDVEVIYLYPWAVSFV), and 86 to 106 (LGLAGLIKMFLFIFILVLGLW).

It belongs to the complex I subunit 3 family. In terms of assembly, NDH-1 is composed of 14 different subunits. Subunits NuoA, H, J, K, L, M, N constitute the membrane sector of the complex.

The protein resides in the cell membrane. The catalysed reaction is a quinone + NADH + 5 H(+)(in) = a quinol + NAD(+) + 4 H(+)(out). Its function is as follows. NDH-1 shuttles electrons from NADH, via FMN and iron-sulfur (Fe-S) centers, to quinones in the respiratory chain. The immediate electron acceptor for the enzyme in this species is believed to be a menaquinone. Couples the redox reaction to proton translocation (for every two electrons transferred, four hydrogen ions are translocated across the cytoplasmic membrane), and thus conserves the redox energy in a proton gradient. The sequence is that of NADH-quinone oxidoreductase subunit A from Desulforamulus reducens (strain ATCC BAA-1160 / DSM 100696 / MI-1) (Desulfotomaculum reducens).